Consider the following 263-residue polypeptide: 3-deoxy-manno-octulosonate cytidylyltransferase (263 aa).

This sequence belongs to the KdsB family.

It localises to the cytoplasm. It catalyses the reaction 3-deoxy-alpha-D-manno-oct-2-ulosonate + CTP = CMP-3-deoxy-beta-D-manno-octulosonate + diphosphate. The protein operates within nucleotide-sugar biosynthesis; CMP-3-deoxy-D-manno-octulosonate biosynthesis; CMP-3-deoxy-D-manno-octulosonate from 3-deoxy-D-manno-octulosonate and CTP: step 1/1. It functions in the pathway bacterial outer membrane biogenesis; lipopolysaccharide biosynthesis. Its function is as follows. Activates KDO (a required 8-carbon sugar) for incorporation into bacterial lipopolysaccharide in Gram-negative bacteria. This Burkholderia cenocepacia (strain HI2424) protein is 3-deoxy-manno-octulosonate cytidylyltransferase.